The primary structure comprises 240 residues: DNA repair protein RecO (240 aa).

This sequence belongs to the RecO family.

In terms of biological role, involved in DNA repair and RecF pathway recombination. The chain is DNA repair protein RecO from Wolbachia sp. subsp. Drosophila simulans (strain wRi).